A 177-amino-acid chain; its full sequence is UPF0102 protein BPP4042 (177 aa).

The tract at residues 13-43 (AAQAQRRLHRRPPASPRASPGARDGGSPTQR) is disordered.

It belongs to the UPF0102 family.

The chain is UPF0102 protein BPP4042 from Bordetella parapertussis (strain 12822 / ATCC BAA-587 / NCTC 13253).